A 61-amino-acid chain; its full sequence is Large ribosomal subunit protein uL30 (61 aa).

This sequence belongs to the universal ribosomal protein uL30 family. Part of the 50S ribosomal subunit.

In Corynebacterium diphtheriae (strain ATCC 700971 / NCTC 13129 / Biotype gravis), this protein is Large ribosomal subunit protein uL30.